Consider the following 651-residue polypeptide: Chaperone protein HtpG (651 aa).

An a; substrate-binding region spans residues 1 to 353 (MAPHVEQLEF…AQDMSLNVSR (353 aa)). The tract at residues 354-569 (EILQQDRQIR…TFGITPALAR (216 aa)) is b. The tract at residues 570 to 651 (MYRASGQPVP…RLTRMVGEQS (82 aa)) is c.

The protein belongs to the heat shock protein 90 family. In terms of assembly, homodimer.

The protein resides in the cytoplasm. In terms of biological role, molecular chaperone. Has ATPase activity. The polypeptide is Chaperone protein HtpG (Mycolicibacterium gilvum (strain PYR-GCK) (Mycobacterium gilvum (strain PYR-GCK))).